Here is a 324-residue protein sequence, read N- to C-terminus: uncharacterized protein (324 aa).

This sequence belongs to the mgp1/MG371 family.

This is an uncharacterized protein from Mycoplasma genitalium (strain ATCC 33530 / DSM 19775 / NCTC 10195 / G37) (Mycoplasmoides genitalium).